Consider the following 231-residue polypeptide: Cytochrome c oxidase assembly factor 7 (231 aa).

Position 2 is an N-acetylalanine (alanine 2). Sel1-like repeat units follow at residues 34-66 (PEGC…EKYG), 68-104 (GDSC…EKPG), 108-146 (VESC…DGGY), 147-183 (AASC…DLGH), and 184-219 (VWAC…QLHK).

Belongs to the hcp beta-lactamase family. Interacts with CHCHD4/MIA40 through transient intermolecular disulfide bonds.

It localises to the mitochondrion intermembrane space. Functionally, required for assembly of mitochondrial respiratory chain complex I and complex IV. The sequence is that of Cytochrome c oxidase assembly factor 7 (Coa7) from Mus musculus (Mouse).